Reading from the N-terminus, the 279-residue chain is Large ribosomal subunit protein mL46 (279 aa).

An N6-acetyllysine modification is found at lysine 230.

This sequence belongs to the mitochondrion-specific ribosomal protein mL46 family. Component of the mitochondrial large ribosomal subunit (mt-LSU). Mature mammalian 55S mitochondrial ribosomes consist of a small (28S) and a large (39S) subunit. The 28S small subunit contains a 12S ribosomal RNA (12S mt-rRNA) and 30 different proteins. The 39S large subunit contains a 16S rRNA (16S mt-rRNA), a copy of mitochondrial valine transfer RNA (mt-tRNA(Val)), which plays an integral structural role, and 52 different proteins. mL46 is located at the central protuberance.

Its subcellular location is the mitochondrion. In Homo sapiens (Human), this protein is Large ribosomal subunit protein mL46 (MRPL46).